A 172-amino-acid polypeptide reads, in one-letter code: NAD(P)H-quinone oxidoreductase subunit I, chloroplastic (172 aa).

4Fe-4S ferredoxin-type domains follow at residues 55–84 (GRIH…VDWK) and 95–124 (LNYS…MTEE). [4Fe-4S] cluster is bound by residues cysteine 64, cysteine 67, cysteine 70, cysteine 74, cysteine 104, cysteine 107, cysteine 110, and cysteine 114.

It belongs to the complex I 23 kDa subunit family. As to quaternary structure, NDH is composed of at least 16 different subunits, 5 of which are encoded in the nucleus. Requires [4Fe-4S] cluster as cofactor.

Its subcellular location is the plastid. The protein resides in the chloroplast thylakoid membrane. It catalyses the reaction a plastoquinone + NADH + (n+1) H(+)(in) = a plastoquinol + NAD(+) + n H(+)(out). It carries out the reaction a plastoquinone + NADPH + (n+1) H(+)(in) = a plastoquinol + NADP(+) + n H(+)(out). Its function is as follows. NDH shuttles electrons from NAD(P)H:plastoquinone, via FMN and iron-sulfur (Fe-S) centers, to quinones in the photosynthetic chain and possibly in a chloroplast respiratory chain. The immediate electron acceptor for the enzyme in this species is believed to be plastoquinone. Couples the redox reaction to proton translocation, and thus conserves the redox energy in a proton gradient. The chain is NAD(P)H-quinone oxidoreductase subunit I, chloroplastic from Capsella bursa-pastoris (Shepherd's purse).